Consider the following 722-residue polypeptide: Fatty acid oxidation complex subunit alpha (722 aa).

The enoyl-CoA hydratase/isomerase stretch occupies residues 1 to 189 (MIYQGKSLSA…AQGAIDAVVE (189 aa)). Residue Asp-296 coordinates substrate. Residues 311–722 (TKAVNKAAVL…SYFTTDVKLA (412 aa)) form a 3-hydroxyacyl-CoA dehydrogenase region. NAD(+) contacts are provided by residues Met-325, Asp-344, 401–403 (VVE), Lys-408, and Ser-430. Residue His-451 is the For 3-hydroxyacyl-CoA dehydrogenase activity of the active site. Residue Asn-454 coordinates NAD(+). Substrate contacts are provided by Asn-501 and Tyr-661.

This sequence in the N-terminal section; belongs to the enoyl-CoA hydratase/isomerase family. It in the C-terminal section; belongs to the 3-hydroxyacyl-CoA dehydrogenase family. As to quaternary structure, heterotetramer of two alpha chains (FadB) and two beta chains (FadA).

It catalyses the reaction a (3S)-3-hydroxyacyl-CoA + NAD(+) = a 3-oxoacyl-CoA + NADH + H(+). The enzyme catalyses a (3S)-3-hydroxyacyl-CoA = a (2E)-enoyl-CoA + H2O. It carries out the reaction a 4-saturated-(3S)-3-hydroxyacyl-CoA = a (3E)-enoyl-CoA + H2O. The catalysed reaction is (3S)-3-hydroxybutanoyl-CoA = (3R)-3-hydroxybutanoyl-CoA. It catalyses the reaction a (3Z)-enoyl-CoA = a 4-saturated (2E)-enoyl-CoA. The enzyme catalyses a (3E)-enoyl-CoA = a 4-saturated (2E)-enoyl-CoA. It functions in the pathway lipid metabolism; fatty acid beta-oxidation. Functionally, involved in the aerobic and anaerobic degradation of long-chain fatty acids via beta-oxidation cycle. Catalyzes the formation of 3-oxoacyl-CoA from enoyl-CoA via L-3-hydroxyacyl-CoA. It can also use D-3-hydroxyacyl-CoA and cis-3-enoyl-CoA as substrate. This chain is Fatty acid oxidation complex subunit alpha, found in Colwellia psychrerythraea (strain 34H / ATCC BAA-681) (Vibrio psychroerythus).